We begin with the raw amino-acid sequence, 502 residues long: Probable cytochrome P450 514A4 (502 aa).

The chain crosses the membrane as a helical span at residues 4 to 24 (IFTIILTITILVLSLILKDLL). Cysteine 448 contacts heme.

Belongs to the cytochrome P450 family. The cofactor is heme.

It localises to the membrane. The polypeptide is Probable cytochrome P450 514A4 (cyp514A4) (Dictyostelium discoideum (Social amoeba)).